The chain runs to 104 residues: Putative membrane protein insertion efficiency factor (104 aa).

The segment at 83 to 104 (SSPTPLAESPDDRTVPHTQETS) is disordered.

This sequence belongs to the UPF0161 family.

The protein localises to the cell inner membrane. Could be involved in insertion of integral membrane proteins into the membrane. This is Putative membrane protein insertion efficiency factor from Chlamydia trachomatis serovar D (strain ATCC VR-885 / DSM 19411 / UW-3/Cx).